The sequence spans 96 residues: Co-chaperonin GroES (96 aa).

It belongs to the GroES chaperonin family. Heptamer of 7 subunits arranged in a ring. Interacts with the chaperonin GroEL.

It localises to the cytoplasm. Its function is as follows. Together with the chaperonin GroEL, plays an essential role in assisting protein folding. The GroEL-GroES system forms a nano-cage that allows encapsulation of the non-native substrate proteins and provides a physical environment optimized to promote and accelerate protein folding. GroES binds to the apical surface of the GroEL ring, thereby capping the opening of the GroEL channel. This chain is Co-chaperonin GroES, found in Actinobacillus pleuropneumoniae serotype 7 (strain AP76).